An 85-amino-acid polypeptide reads, in one-letter code: RNA-binding protein Hfq (85 aa).

Positions 10 to 70 constitute a Sm domain; the sequence is DAFLNQVRKE…ISTIIPQRPV (61 aa).

It belongs to the Hfq family. Homohexamer.

In terms of biological role, RNA chaperone that binds small regulatory RNA (sRNAs) and mRNAs to facilitate mRNA translational regulation in response to envelope stress, environmental stress and changes in metabolite concentrations. Also binds with high specificity to tRNAs. This Carboxydothermus hydrogenoformans (strain ATCC BAA-161 / DSM 6008 / Z-2901) protein is RNA-binding protein Hfq.